Reading from the N-terminus, the 159-residue chain is Na(+)/H(+) antiporter subunit E1 (159 aa).

The next 4 membrane-spanning stretches (helical) occupy residues 1–21 (MAIQFVINLLVSVIWLLVTNS), 27–47 (FVLGFILGLFLVYLLHRVLPG), 60–80 (LIITFLTELIKANFGVLKIIL), and 101–121 (WQLVLLSNLITLTPGTVVLGI).

Belongs to the CPA3 antiporters (TC 2.A.63) subunit E family. May form a heterooligomeric complex that consists of seven subunits: mnhA1, mnhB1, mnhC1, mnhD1, mnhE1, mnhF1 and mnhG1.

The protein localises to the cell membrane. Functionally, mnh complex is a Na(+)/H(+) antiporter involved in Na(+) excretion. The chain is Na(+)/H(+) antiporter subunit E1 (mnhE1) from Staphylococcus epidermidis (strain ATCC 35984 / DSM 28319 / BCRC 17069 / CCUG 31568 / BM 3577 / RP62A).